The following is a 185-amino-acid chain: Ribosome-recycling factor (185 aa).

The protein belongs to the RRF family.

It localises to the cytoplasm. In terms of biological role, responsible for the release of ribosomes from messenger RNA at the termination of protein biosynthesis. May increase the efficiency of translation by recycling ribosomes from one round of translation to another. The polypeptide is Ribosome-recycling factor (Pseudothermotoga lettingae (strain ATCC BAA-301 / DSM 14385 / NBRC 107922 / TMO) (Thermotoga lettingae)).